The chain runs to 74 residues: Omega-filistatoxin-Kh1a (74 aa).

In terms of processing, contains 6 disulfide bonds. As to expression, expressed by the venom gland.

Its subcellular location is the secreted. Functionally, potently blocks vertebrate calcium channels Cav1 and Cav2. Is the most active on Cav2.2/CACNA1B (from HEK) (IC(50)=2.3 nM), followed by Cav2.1/CACNA1A (IC(50)=4.3 nM), Cav2.2/CACNA1B (from oocyte) (IC(50)=14.4 nM), Cav1.2/CACNA1C (IC(50)=26.8 nM), and Cav2.3/CACNA1E (IC(50)=96.4 nM). This Kukulcania hibernalis (Southern house spider) protein is Omega-filistatoxin-Kh1a.